Reading from the N-terminus, the 160-residue chain is Glucan endo-1,3-beta-glucosidase, acidic isoform PR-O (160 aa).

Residue E81 is the Nucleophile of the active site.

The protein belongs to the glycosyl hydrolase 17 family. Post-translationally, the N-terminus is blocked.

The protein localises to the secreted. Its subcellular location is the extracellular space. The enzyme catalyses Hydrolysis of (1-&gt;3)-beta-D-glucosidic linkages in (1-&gt;3)-beta-D-glucans.. In terms of biological role, implicated in the defense of plants against pathogens. This chain is Glucan endo-1,3-beta-glucosidase, acidic isoform PR-O (PR0), found in Nicotiana tabacum (Common tobacco).